Reading from the N-terminus, the 288-residue chain is MKDHLVRVATQDGTLRATAAVTTELVDAICRRQGTDPTASVALGRLVTGTALMGSLLKGDQRLALMIEGNGPVKKLHAETDALGQVRGSVKEPISGIAPTETGFDVPAAIGRAGFLHVVKDLGLKEPYRGMVQLYSSEVAEDLAYYLTSSEQVPSTVALGVYLEKDGRISAAGGLLVQALPEGEEALIALLEERLVALPPITTLLRDGKGPRQIIEELFAGIPLGRNEETPLVFRCTCSRSQVLGMLKTLGEEELKDMAAKDEQTSVVCEFCKERYSFSSDEIKALIA.

2 cysteine pairs are disulfide-bonded: Cys-236–Cys-238 and Cys-269–Cys-272.

The protein belongs to the HSP33 family. In terms of processing, under oxidizing conditions two disulfide bonds are formed involving the reactive cysteines. Under reducing conditions zinc is bound to the reactive cysteines and the protein is inactive.

It is found in the cytoplasm. Redox regulated molecular chaperone. Protects both thermally unfolding and oxidatively damaged proteins from irreversible aggregation. Plays an important role in the bacterial defense system toward oxidative stress. This is 33 kDa chaperonin from Syntrophotalea carbinolica (strain DSM 2380 / NBRC 103641 / GraBd1) (Pelobacter carbinolicus).